A 217-amino-acid chain; its full sequence is Ribonuclease T (217 aa).

Residues 20 to 195 (VVVDVETAGF…YDTEKTAELF (176 aa)) form the Exonuclease domain. 4 residues coordinate Mg(2+): aspartate 23, glutamate 25, histidine 182, and aspartate 187. Histidine 182 serves as the catalytic Proton donor/acceptor.

Belongs to the RNase T family. Homodimer. Mg(2+) is required as a cofactor.

Its function is as follows. Trims short 3' overhangs of a variety of RNA species, leaving a one or two nucleotide 3' overhang. Responsible for the end-turnover of tRNA: specifically removes the terminal AMP residue from uncharged tRNA (tRNA-C-C-A). Also appears to be involved in tRNA biosynthesis. The polypeptide is Ribonuclease T (Vibrio vulnificus (strain YJ016)).